The chain runs to 285 residues: Tyrosine recombinase XerA (285 aa).

Positions 7–84 constitute a Core-binding (CB) domain; the sequence is IVNSDILEEF…ALKSYFKFEG (78 aa). Residues 100-274 enclose the Tyr recombinase domain; sequence SLPKSLTEDE…TTKHLREAIE (175 aa). Residues Arg-135, Lys-160, His-226, Arg-229, and His-252 contribute to the active site. The active-site O-(3'-phospho-DNA)-tyrosine intermediate is Tyr-261.

This sequence belongs to the 'phage' integrase family. XerA subfamily.

The protein localises to the cytoplasm. Its function is as follows. Site-specific tyrosine recombinase, which acts by catalyzing the cutting and rejoining of the recombining DNA molecules. The sequence is that of Tyrosine recombinase XerA from Pyrococcus horikoshii (strain ATCC 700860 / DSM 12428 / JCM 9974 / NBRC 100139 / OT-3).